The following is a 181-amino-acid chain: uncharacterized protein (181 aa).

To M.jannaschii MJ1106.

This is an uncharacterized protein from Methanothermobacter thermautotrophicus (strain ATCC 29096 / DSM 1053 / JCM 10044 / NBRC 100330 / Delta H) (Methanobacterium thermoautotrophicum).